The following is a 460-amino-acid chain: Bifunctional protein GlmU (460 aa).

The segment at 1 to 229 (MTNYAIILAA…FNESLGVNDR (229 aa)) is pyrophosphorylase. Residues 8–11 (LAAG), Lys22, Gln72, and 77–78 (GT) contribute to the UDP-N-acetyl-alpha-D-glucosamine site. Asp102 is a binding site for Mg(2+). Residues Gly139, Glu154, Asn169, and Asn227 each coordinate UDP-N-acetyl-alpha-D-glucosamine. Asn227 is a binding site for Mg(2+). The tract at residues 230-250 (VALATAETVMRQRITQKHMVN) is linker. An N-acetyltransferase region spans residues 251–460 (GVTFQNPETV…RLAHHPSRSK (210 aa)). The UDP-N-acetyl-alpha-D-glucosamine site is built by Arg332 and Lys350. His362 acts as the Proton acceptor in catalysis. UDP-N-acetyl-alpha-D-glucosamine contacts are provided by Tyr365 and Asn376. Residues Ala379, 385-386 (NY), Ser404, Ala422, and Arg439 contribute to the acetyl-CoA site.

It in the N-terminal section; belongs to the N-acetylglucosamine-1-phosphate uridyltransferase family. The protein in the C-terminal section; belongs to the transferase hexapeptide repeat family. As to quaternary structure, homotrimer. Requires Mg(2+) as cofactor.

The protein resides in the cytoplasm. It catalyses the reaction alpha-D-glucosamine 1-phosphate + acetyl-CoA = N-acetyl-alpha-D-glucosamine 1-phosphate + CoA + H(+). It carries out the reaction N-acetyl-alpha-D-glucosamine 1-phosphate + UTP + H(+) = UDP-N-acetyl-alpha-D-glucosamine + diphosphate. Its pathway is nucleotide-sugar biosynthesis; UDP-N-acetyl-alpha-D-glucosamine biosynthesis; N-acetyl-alpha-D-glucosamine 1-phosphate from alpha-D-glucosamine 6-phosphate (route II): step 2/2. It participates in nucleotide-sugar biosynthesis; UDP-N-acetyl-alpha-D-glucosamine biosynthesis; UDP-N-acetyl-alpha-D-glucosamine from N-acetyl-alpha-D-glucosamine 1-phosphate: step 1/1. It functions in the pathway bacterial outer membrane biogenesis; LPS lipid A biosynthesis. Catalyzes the last two sequential reactions in the de novo biosynthetic pathway for UDP-N-acetylglucosamine (UDP-GlcNAc). The C-terminal domain catalyzes the transfer of acetyl group from acetyl coenzyme A to glucosamine-1-phosphate (GlcN-1-P) to produce N-acetylglucosamine-1-phosphate (GlcNAc-1-P), which is converted into UDP-GlcNAc by the transfer of uridine 5-monophosphate (from uridine 5-triphosphate), a reaction catalyzed by the N-terminal domain. This Streptococcus pyogenes serotype M18 (strain MGAS8232) protein is Bifunctional protein GlmU.